The sequence spans 650 residues: Probable protein phosphatase 2C 36 (650 aa).

A disordered region spans residues 146–166; the sequence is SGKKTKEKAKLKKSGSKSFTK. Positions 148–166 are enriched in basic residues; it reads KKTKEKAKLKKSGSKSFTK. One can recognise a PPM-type phosphatase domain in the interval 239 to 641; it reads ESALEEPKIQ…DDVSVIVISL (403 aa). Residues aspartate 276, glycine 277, aspartate 569, and aspartate 632 each contribute to the Mn(2+) site.

It belongs to the PP2C family. The cofactor is Mg(2+). Mn(2+) is required as a cofactor.

It is found in the nucleus. The catalysed reaction is O-phospho-L-seryl-[protein] + H2O = L-seryl-[protein] + phosphate. It catalyses the reaction O-phospho-L-threonyl-[protein] + H2O = L-threonyl-[protein] + phosphate. The polypeptide is Probable protein phosphatase 2C 36 (PLL3) (Arabidopsis thaliana (Mouse-ear cress)).